The sequence spans 532 residues: Wee1-like protein kinase 2 (532 aa).

Residues 123–166 (INPFTPDTVRRNSEHYKRKSQRSDDDEDYGPRSKEIQNSSEDES) form a disordered region. Residues 188-465 (FLELACIGVG…RHDVLCKERA (278 aa)) form the Protein kinase domain. Residues 194 to 202 (IGVGEFGSV) and lysine 217 contribute to the ATP site. The Proton acceptor role is filled by aspartate 315. Residues asparagine 320 and aspartate 354 each contribute to the Mg(2+) site. The stretch at 469–495 (ATQLRKELNVEKFRTAMLERELKEARL) forms a coiled coil.

The protein belongs to the protein kinase superfamily. Ser/Thr protein kinase family. WEE1 subfamily.

The protein resides in the nucleus. The catalysed reaction is L-tyrosyl-[protein] + ATP = O-phospho-L-tyrosyl-[protein] + ADP + H(+). In terms of biological role, oocyte-specific protein tyrosine kinase that phosphorylates and inhibits cdk1 and acts as a key regulator of meiosis. Required to maintain meiotic arrest in oocytes by phosphorylating cdk1 at 'Tyr-15', leading to inhibit cdk1 activity and prevent meiotic reentry. The polypeptide is Wee1-like protein kinase 2 (wee2) (Danio rerio (Zebrafish)).